A 289-amino-acid polypeptide reads, in one-letter code: 4-hydroxybenzoate octaprenyltransferase (289 aa).

Helical transmembrane passes span I19–L39, I42–I62, G85–I105, V107–L127, F134–F154, A165–L185, I211–F231, S233–Y253, and F265–I285.

This sequence belongs to the UbiA prenyltransferase family. Mg(2+) is required as a cofactor.

It localises to the cell inner membrane. The enzyme catalyses all-trans-octaprenyl diphosphate + 4-hydroxybenzoate = 4-hydroxy-3-(all-trans-octaprenyl)benzoate + diphosphate. The protein operates within cofactor biosynthesis; ubiquinone biosynthesis. Its function is as follows. Catalyzes the prenylation of para-hydroxybenzoate (PHB) with an all-trans polyprenyl group. Mediates the second step in the final reaction sequence of ubiquinone-8 (UQ-8) biosynthesis, which is the condensation of the polyisoprenoid side chain with PHB, generating the first membrane-bound Q intermediate 3-octaprenyl-4-hydroxybenzoate. The chain is 4-hydroxybenzoate octaprenyltransferase from Francisella tularensis subsp. holarctica (strain FTNF002-00 / FTA).